The primary structure comprises 171 residues: Sigma intracellular receptor 2 (171 aa).

The Cytoplasmic segment spans residues 1–6; sequence MAVCAR. A helical membrane pass occupies residues 7–27; it reads LLEWIFFFYFFSHIPITLLVD. One can recognise an EXPERA domain in the interval 8-153; sequence LEWIFFFYFF…PYLLVPVLLL (146 aa). Topologically, residues 28-66 are lumenal; sequence LQAVLPPSLYPQELLDLMKWYTVAFKDHLMANPPPWFKS. A helical transmembrane segment spans residues 67–87; it reads FVYCEAILQLPFFPVAAYAFF. Cholesterol-binding residues include I73 and Q75. Residues 88-97 lie on the Cytoplasmic side of the membrane; sequence KGGCKWIRIP. Residues 98 to 118 traverse the membrane as a helical segment; sequence AIVYSAHVATTVIAIIGHILF. Topologically, residues 119–137 are lumenal; the sequence is GEFPKSDVIAPLTQKDRLT. Residues 138–158 form a helical membrane-spanning segment; the sequence is LVSIYAPYLLVPVLLLLTMLF. Residues 159-171 are Cytoplasmic-facing; that stretch reads SPRYRQEEKRKRK. Residues 167–171 carry the ER retention motif motif; it reads KRKRK.

Belongs to the TMEM97/sigma-2 receptor family. Homodimer.

The protein resides in the rough endoplasmic reticulum membrane. The protein localises to the nucleus membrane. Functionally, sigma-2 receptor which contributes to ameliorate dysfunctional cellular processes and slow degenerative progression by regulating cell functions including cholesterol biosynthesis/trafficking, membrane trafficking, autophagy, lipid membrane-bound protein trafficking, and receptor stabilization at the cell surface. Forms a ternary complex with PGRMC1 receptor and low density lipoprotein receptor/LDLR at the plasma membrane, which increases LDLR-mediated LDL cholesterol internalization. Decreases lysosomal sterol transporter NPC1 availability to the cell, probably through NPC1-binding, hence controlling lipid transport, including cholesterol and LBPA, outside of late endosome/lysosome. Binds regio- and stereoselective ligand 20(S)-hydroxycholesterol (20(S)-OHC), thereby linking OHC binding to cholesterol homeostasis. Also able to bind cholesterol. Binds histatin 1 (Hst 1)/HN1 salivary peptide at the ER membrane, which is critical for increasing mitochondria-ER contacts and stimulating Hst1 wound healing properties. May alter the activity of some cytochrome P450 proteins. Although shows homologies with sterol isomerases (EXPERA domain), not able to catalyze sterol isomerization. However, may act as sensors of these molecules. Acts as a quality control factor in the ER, promoting the proteolytic degradation of nonproductive and extramitochondrial precursor proteins in the ER membrane thus removing them from the ER surface. The sequence is that of Sigma intracellular receptor 2 (tmem97) from Xenopus tropicalis (Western clawed frog).